Here is a 201-residue protein sequence, read N- to C-terminus: Small ribosomal subunit protein uS4c (201 aa).

Positions 20-43 (GLTSKRPRAGSDLRNQSRAGKKSQ) are disordered. Positions 89 to 150 (MRLDNILFRL…EQKSRVMIQN (62 aa)) constitute an S4 RNA-binding domain.

The protein belongs to the universal ribosomal protein uS4 family. Part of the 30S ribosomal subunit. Contacts protein S5. The interaction surface between S4 and S5 is involved in control of translational fidelity.

The protein localises to the plastid. Its subcellular location is the chloroplast. One of the primary rRNA binding proteins, it binds directly to 16S rRNA where it nucleates assembly of the body of the 30S subunit. In terms of biological role, with S5 and S12 plays an important role in translational accuracy. This is Small ribosomal subunit protein uS4c (rps4) from Populus alba (White poplar).